The chain runs to 161 residues: Putative 4-hydroxy-4-methyl-2-oxoglutarate aldolase (161 aa).

Residues 75-78 and Arg97 contribute to the substrate site; that span reads GDML. Residue Asp98 participates in a divalent metal cation binding.

It belongs to the class II aldolase/RraA-like family. As to quaternary structure, homotrimer. Requires a divalent metal cation as cofactor.

The catalysed reaction is 4-hydroxy-4-methyl-2-oxoglutarate = 2 pyruvate. It carries out the reaction oxaloacetate + H(+) = pyruvate + CO2. Its function is as follows. Catalyzes the aldol cleavage of 4-hydroxy-4-methyl-2-oxoglutarate (HMG) into 2 molecules of pyruvate. Also contains a secondary oxaloacetate (OAA) decarboxylase activity due to the common pyruvate enolate transition state formed following C-C bond cleavage in the retro-aldol and decarboxylation reactions. This chain is Putative 4-hydroxy-4-methyl-2-oxoglutarate aldolase, found in Marinomonas sp. (strain MWYL1).